The sequence spans 106 residues: uncharacterized protein (106 aa).

Residues alanine 85–proline 101 traverse the membrane as a helical segment.

It is found in the membrane. This is an uncharacterized protein from Saccharomyces cerevisiae (strain ATCC 204508 / S288c) (Baker's yeast).